Here is a 478-residue protein sequence, read N- to C-terminus: SPbeta prophage-derived uncharacterized protein YonD (478 aa).

The stretch at 326 to 419 (IQSQLNQKDE…KFSTEEVQNL (94 aa)) forms a coiled coil.

The sequence is that of SPbeta prophage-derived uncharacterized protein YonD (yonD) from Bacillus subtilis (strain 168).